The chain runs to 1331 residues: Alpha,alpha-trehalose-phosphate synthase [UDP-forming] 1 (1331 aa).

Positions 1 to 13 (MTDTATGVHSNAN) are enriched in polar residues. Disordered stretches follow at residues 1–50 (MTDT…DNDP), 71–118 (TGKE…SGQL), and 1312–1331 (PMDQEESSTLGASLGTSFGN). The span at 39-50 (DPFDRPKNDNDP) shows a compositional bias: basic and acidic residues. A compositionally biased stretch (acidic residues) spans 77–98 (LDESDDMTENEDHDEMANEDDG). The span at 102-112 (NEKKVETRKMD) shows a compositional bias: basic and acidic residues. Residues 1318-1331 (SSTLGASLGTSFGN) are compositionally biased toward polar residues.

The protein in the N-terminal section; belongs to the glycosyltransferase 20 family. In the C-terminal section; belongs to the gob-1 trehalose phosphatase family.

It catalyses the reaction D-glucose 6-phosphate + UDP-alpha-D-glucose = alpha,alpha-trehalose 6-phosphate + UDP + H(+). Functionally, catalyzes the production of trehalose from glucose-6-phosphate and UDP-alpha-D-glucose in a 2 step process. The polypeptide is Alpha,alpha-trehalose-phosphate synthase [UDP-forming] 1 (tps-1) (Caenorhabditis elegans).